The chain runs to 54 residues: Chymosin (54 aa).

Residues 1–27 (SEITRVPLHKGKSLRKALKEHGLLEBF) constitute a propeptide, activation peptide.

Belongs to the peptidase A1 family. In terms of assembly, monomer.

It carries out the reaction Broad specificity similar to that of pepsin A. Clots milk by cleavage of a single 104-Ser-Phe-|-Met-Ala-107 bond in kappa-chain of casein.. In terms of biological role, chymosin is synthesized in the mucosa of the stomach. The enzyme hydrolyzes casein to paracasein. This chain is Chymosin (CYM), found in Felis catus (Cat).